The primary structure comprises 181 residues: Adenine phosphoribosyltransferase (181 aa).

The protein belongs to the purine/pyrimidine phosphoribosyltransferase family. As to quaternary structure, homodimer.

It localises to the cytoplasm. The catalysed reaction is AMP + diphosphate = 5-phospho-alpha-D-ribose 1-diphosphate + adenine. It functions in the pathway purine metabolism; AMP biosynthesis via salvage pathway; AMP from adenine: step 1/1. Catalyzes a salvage reaction resulting in the formation of AMP, that is energically less costly than de novo synthesis. This Methylorubrum extorquens (strain CM4 / NCIMB 13688) (Methylobacterium extorquens) protein is Adenine phosphoribosyltransferase.